A 187-amino-acid chain; its full sequence is Peptide deformylase (187 aa).

C96 and H138 together coordinate Fe cation. The active site involves E139. H142 contributes to the Fe cation binding site.

Belongs to the polypeptide deformylase family. It depends on Fe(2+) as a cofactor.

It carries out the reaction N-terminal N-formyl-L-methionyl-[peptide] + H2O = N-terminal L-methionyl-[peptide] + formate. Its function is as follows. Removes the formyl group from the N-terminal Met of newly synthesized proteins. Requires at least a dipeptide for an efficient rate of reaction. N-terminal L-methionine is a prerequisite for activity but the enzyme has broad specificity at other positions. This Brachyspira hyodysenteriae (strain ATCC 49526 / WA1) protein is Peptide deformylase.